A 582-amino-acid polypeptide reads, in one-letter code: ATP-dependent lipid A-core flippase (582 aa).

A run of 5 helical transmembrane segments spans residues 16–36, 63–83, 153–173, 253–273, and 275–295; these read LWPMISPFKTGLIVAAIALIL, ILVWMPLVVIGLMVLRGVSGF, IIGLFAMMFYYSWQLSLILVV, PLIQFIASLALAFVLYAASFP, and VMETLTAGTITVVFSSMIALM. The region spanning 28–310 is the ABC transmembrane type-1 domain; the sequence is IVAAIALILN…LTNVNAQFQR (283 aa). An ABC transporter domain is found at 342-578; that stretch reads IAFDHVTFSY…QGVYAQLHQL (237 aa). 376-383 is a binding site for ATP; the sequence is GRSGSGKS.

It belongs to the ABC transporter superfamily. Lipid exporter (TC 3.A.1.106) family. In terms of assembly, homodimer.

The protein resides in the cell inner membrane. The enzyme catalyses ATP + H2O + lipid A-core oligosaccharideSide 1 = ADP + phosphate + lipid A-core oligosaccharideSide 2.. In terms of biological role, involved in lipopolysaccharide (LPS) biosynthesis. Translocates lipid A-core from the inner to the outer leaflet of the inner membrane. Transmembrane domains (TMD) form a pore in the inner membrane and the ATP-binding domain (NBD) is responsible for energy generation. This Sodalis glossinidius (strain morsitans) protein is ATP-dependent lipid A-core flippase.